Here is a 1033-residue protein sequence, read N- to C-terminus: Error-prone DNA polymerase (1033 aa).

This sequence belongs to the DNA polymerase type-C family. DnaE2 subfamily.

It localises to the cytoplasm. It catalyses the reaction DNA(n) + a 2'-deoxyribonucleoside 5'-triphosphate = DNA(n+1) + diphosphate. In terms of biological role, DNA polymerase involved in damage-induced mutagenesis and translesion synthesis (TLS). It is not the major replicative DNA polymerase. The sequence is that of Error-prone DNA polymerase from Teredinibacter turnerae (strain ATCC 39867 / T7901).